A 200-amino-acid chain; its full sequence is Dephospho-CoA kinase (200 aa).

Residues valine 4–aspartate 200 enclose the DPCK domain. Alanine 12–threonine 17 lines the ATP pocket.

This sequence belongs to the CoaE family.

The protein localises to the cytoplasm. It carries out the reaction 3'-dephospho-CoA + ATP = ADP + CoA + H(+). It functions in the pathway cofactor biosynthesis; coenzyme A biosynthesis; CoA from (R)-pantothenate: step 5/5. In terms of biological role, catalyzes the phosphorylation of the 3'-hydroxyl group of dephosphocoenzyme A to form coenzyme A. This is Dephospho-CoA kinase from Bacillus anthracis.